Here is a 156-residue protein sequence, read N- to C-terminus: Mitochondrial translation release factor in rescue (156 aa).

The interval 44 to 108 (EEELEEQFVR…LREKLEVAYK (65 aa)) is GGQ domain. The GGQ motif lies at 58–60 (GGQ). A coiled-coil region spans residues 100 to 141 (REKLEVAYKGEESELLKMKKESMQKKQDKRRKVNENIEKKRR). Composition is skewed to basic and acidic residues over residues 114–125 (LLKMKKESMQKK) and 132–156 (VNEN…DKST). Positions 114–156 (LLKMKKESMQKKQDKRRKVNENIEKKRRFKEMLNSKQEDDKST) are disordered.

This sequence belongs to the prokaryotic/mitochondrial release factor family. Interacts (via C-terminus) with MTRES1 (via S4 domain). Associates with mitoribosomal S39 large subunit, peptidyl tRNA and nascent chain.

It is found in the mitochondrion. Functionally, part of a mitoribosome-associated quality control pathway that prevents aberrant translation by responding to interruptions during elongation. As heterodimer with MTRES1, ejects the unfinished nascent chain and peptidyl transfer RNA (tRNA), respectively, from stalled ribosomes. Recruitment of mitoribosome biogenesis factors to these quality control intermediates suggests additional roles for MTRES1 and MTRF during mitoribosome rescue. The chain is Mitochondrial translation release factor in rescue (mtrfr) from Danio rerio (Zebrafish).